The sequence spans 423 residues: Exodeoxyribonuclease 7 large subunit (423 aa).

Belongs to the XseA family. In terms of assembly, heterooligomer composed of large and small subunits.

It localises to the cytoplasm. The enzyme catalyses Exonucleolytic cleavage in either 5'- to 3'- or 3'- to 5'-direction to yield nucleoside 5'-phosphates.. Bidirectionally degrades single-stranded DNA into large acid-insoluble oligonucleotides, which are then degraded further into small acid-soluble oligonucleotides. This chain is Exodeoxyribonuclease 7 large subunit, found in Natranaerobius thermophilus (strain ATCC BAA-1301 / DSM 18059 / JW/NM-WN-LF).